A 113-amino-acid polypeptide reads, in one-letter code: Hydrogenase maturation factor HypA (113 aa).

His-2 contributes to the Ni(2+) binding site. Residues Cys-73, Cys-76, Cys-89, and Cys-92 each contribute to the Zn(2+) site.

It belongs to the HypA/HybF family.

In terms of biological role, involved in the maturation of [NiFe] hydrogenases. Required for nickel insertion into the metal center of the hydrogenase. The protein is Hydrogenase maturation factor HypA of Bradyrhizobium sp. (strain ORS 278).